A 496-amino-acid polypeptide reads, in one-letter code: Cobyric acid synthase (496 aa).

Residues 255 to 445 (DLEIAVLKLP…LHGLLDNGPW (191 aa)) form the GATase cobBQ-type domain. Residue cysteine 336 is the Nucleophile of the active site. Residue histidine 437 is part of the active site.

It belongs to the CobB/CobQ family. CobQ subfamily.

It participates in cofactor biosynthesis; adenosylcobalamin biosynthesis. Its function is as follows. Catalyzes amidations at positions B, D, E, and G on adenosylcobyrinic A,C-diamide. NH(2) groups are provided by glutamine, and one molecule of ATP is hydrogenolyzed for each amidation. This Parasynechococcus marenigrum (strain WH8102) protein is Cobyric acid synthase.